The sequence spans 295 residues: Excinuclease cho (295 aa).

In terms of domain architecture, GIY-YIG spans 33-108 (TRPGVYLFHG…IKEQQPLFNK (76 aa)).

In terms of biological role, incises the DNA at the 3' side of a lesion during nucleotide excision repair. Incises the DNA farther away from the lesion than UvrC. Not able to incise the 5' site of a lesion. In vitro, the incision activity of Cho is UvrA and UvrB dependent. When a lesion remains because UvrC is not able to induce the 3' incision, Cho incises the DNA. Then UvrC makes the 5' incision. The combined action of Cho and UvrC broadens the substrate range of nucleotide excision repair. This chain is Excinuclease cho (cho), found in Escherichia coli (strain K12).